Here is a 654-residue protein sequence, read N- to C-terminus: Biotin-dependent 3-methylcrotonyl-coenzyme A carboxylase alpha1 subunit (654 aa).

The Biotin carboxylation domain maps to 1–448 (MFDTVLVANR…DTAVLDERSA (448 aa)). The region spanning 120–319 (KNAVAAFDVP…LVEWQLRVGA (200 aa)) is the ATP-grasp domain. 148-209 (AAEVGYPVLI…ERFVLRPRHI (62 aa)) contacts ATP. Positions 275, 290, and 292 each coordinate Mg(2+). Residues E275, E290, and N292 each coordinate Mn(2+). A Biotinyl-binding domain is found at 578–653 (HRAVGARPAE…KVEQVLARIK (76 aa)). K620 is subject to N6-biotinyllysine.

The biotin-dependent acyl-CoA carboxylase complex is composed of AccA1, which contains the biotin carboxylase (BC) and biotin carboxyl carrier protein (BCCP) domains, and AccD1, which contains the carboxyl transferase (CT) domain. The AccA1/AccD1 complex forms a dodecamer. Requires Mg(2+) as cofactor. Mn(2+) serves as cofactor. It depends on biotin as a cofactor.

It carries out the reaction N(6)-biotinyl-L-lysyl-[protein] + hydrogencarbonate + ATP = N(6)-carboxybiotinyl-L-lysyl-[protein] + ADP + phosphate + H(+). The protein operates within amino-acid degradation; L-leucine degradation. Component of a biotin-dependent acyl-CoA carboxylase complex. This subunit catalyzes the ATP-dependent carboxylation of the biotin carried by the biotin carboxyl carrier (BCC) domain, resulting in the formation of carboxyl biotin. When associated with the beta1 subunit AccD1, is involved in branched amino-acid catabolism with methylcrotonyl coenzyme A as the substrate. The sequence is that of Biotin-dependent 3-methylcrotonyl-coenzyme A carboxylase alpha1 subunit (accA1) from Mycobacterium bovis (strain ATCC BAA-935 / AF2122/97).